Consider the following 291-residue polypeptide: QVPVVDLSCPDEELVARTVVKASEDWGVFQVVNHGIPTELIQRLQKVGREFFELPEAEKRSCAREAGSVEGYGRRIELDIKKRKGIVDQIYLSTWPPSSVNYRYWPKSPPDYREVNEEYARHVKTLSEKIMEWLSEGLGLGREAIKEVNGCWYVMNINHYPPYPHSDSFNGLEPHTDINGLTLIITNEIPGLQVFKDDHWIEVEYIPSAIIVNIGDQIMMLSNGKYKNVLHKTTVDKEKTRMSWPVLVSPTYDMVVGPLPELTSEDDPPKFKPIAYKDYVHNKITFLKNKS.

A Fe2OG dioxygenase domain is found at 151-250 (CWYVMNINHY…RMSWPVLVSP (100 aa)). Residues His175, Asp177, and His231 each contribute to the Fe cation site.

It belongs to the iron/ascorbate-dependent oxidoreductase family. L-ascorbate is required as a cofactor. Fe cation serves as cofactor.

It is found in the cytoplasm. The catalysed reaction is a (2R,3R)-dihydroflavonol + 2-oxoglutarate + O2 = a flavonol + succinate + CO2 + H2O. The enzyme catalyses a (2S)-flavan-4-one + 2-oxoglutarate + O2 = a (2R,3R)-dihydroflavonol + succinate + CO2. The protein operates within secondary metabolite biosynthesis; flavonoid biosynthesis. In terms of biological role, catalyzes the formation of flavonols from dihydroflavonols. It can act on dihydrokaempferol to produce kaempferol, on dihydroquercetin to produce quercitin and on dihydromyricetin to produce myricetin. The polypeptide is Flavonol synthase/flavanone 3-hydroxylase (Matthiola incana (Common stock)).